Reading from the N-terminus, the 244-residue chain is tRNA (guanine-N(7)-)-methyltransferase (244 aa).

The span at 1 to 10 (MSDTPQSPAQ) shows a compositional bias: polar residues. A disordered region spans residues 1-20 (MSDTPQSPAQDSLAEHDEAR). S-adenosyl-L-methionine contacts are provided by E74, E99, D126, and D149. D149 is an active-site residue. Substrate contacts are provided by residues K153, D185, and 222 to 225 (TKFE).

It belongs to the class I-like SAM-binding methyltransferase superfamily. TrmB family.

The enzyme catalyses guanosine(46) in tRNA + S-adenosyl-L-methionine = N(7)-methylguanosine(46) in tRNA + S-adenosyl-L-homocysteine. Its pathway is tRNA modification; N(7)-methylguanine-tRNA biosynthesis. In terms of biological role, catalyzes the formation of N(7)-methylguanine at position 46 (m7G46) in tRNA. In Pseudomonas paraeruginosa (strain DSM 24068 / PA7) (Pseudomonas aeruginosa (strain PA7)), this protein is tRNA (guanine-N(7)-)-methyltransferase.